Reading from the N-terminus, the 256-residue chain is Probable ATP-dependent transporter slr0075 (256 aa).

One can recognise an ABC transporter domain in the interval 6 to 250 (LSIKNLTASV…EEKGYDFLDE (245 aa)). 38-45 (GRNGSGKS) provides a ligand contact to ATP.

It belongs to the ABC transporter superfamily. Ycf16 family.

In Synechocystis sp. (strain ATCC 27184 / PCC 6803 / Kazusa), this protein is Probable ATP-dependent transporter slr0075.